A 605-amino-acid chain; its full sequence is Glutamine--fructose-6-phosphate aminotransferase [isomerizing] (605 aa).

Catalysis depends on Cys-2, which acts as the Nucleophile; for GATase activity. A Glutamine amidotransferase type-2 domain is found at 2–219 (CGIVGVVGSK…DKELVVLTKD (218 aa)). 2 SIS domains span residues 285 to 424 (IIKG…AEGE) and 457 to 595 (VADL…VDKP). Lys-600 serves as the catalytic For Fru-6P isomerization activity.

As to quaternary structure, homodimer.

It localises to the cytoplasm. The catalysed reaction is D-fructose 6-phosphate + L-glutamine = D-glucosamine 6-phosphate + L-glutamate. In terms of biological role, catalyzes the first step in hexosamine metabolism, converting fructose-6P into glucosamine-6P using glutamine as a nitrogen source. This is Glutamine--fructose-6-phosphate aminotransferase [isomerizing] from Lactococcus lactis subsp. lactis (strain IL1403) (Streptococcus lactis).